A 938-amino-acid chain; its full sequence is Isoleucine--tRNA ligase (938 aa).

The short motif at 61–71 (PYANGDIHLGT) is the 'HIGH' region element. Glu559 provides a ligand contact to L-isoleucyl-5'-AMP. The 'KMSKS' region signature appears at 601 to 605 (KMSKS). Lys604 lines the ATP pocket. 4 residues coordinate Zn(2+): Cys904, Cys907, Cys923, and Cys926.

Belongs to the class-I aminoacyl-tRNA synthetase family. IleS type 1 subfamily. In terms of assembly, monomer. Zn(2+) serves as cofactor.

The protein localises to the cytoplasm. The catalysed reaction is tRNA(Ile) + L-isoleucine + ATP = L-isoleucyl-tRNA(Ile) + AMP + diphosphate. In terms of biological role, catalyzes the attachment of isoleucine to tRNA(Ile). As IleRS can inadvertently accommodate and process structurally similar amino acids such as valine, to avoid such errors it has two additional distinct tRNA(Ile)-dependent editing activities. One activity is designated as 'pretransfer' editing and involves the hydrolysis of activated Val-AMP. The other activity is designated 'posttransfer' editing and involves deacylation of mischarged Val-tRNA(Ile). In Symbiobacterium thermophilum (strain DSM 24528 / JCM 14929 / IAM 14863 / T), this protein is Isoleucine--tRNA ligase.